The chain runs to 429 residues: Enolase (429 aa).

Residue Gln162 participates in (2R)-2-phosphoglycerate binding. The active-site Proton donor is Glu204. Mg(2+) contacts are provided by Asp241, Glu288, and Asp315. Residues Lys340, Arg369, Ser370, and Lys391 each contribute to the (2R)-2-phosphoglycerate site. Catalysis depends on Lys340, which acts as the Proton acceptor.

This sequence belongs to the enolase family. It depends on Mg(2+) as a cofactor.

The protein localises to the cytoplasm. Its subcellular location is the secreted. The protein resides in the cell surface. The catalysed reaction is (2R)-2-phosphoglycerate = phosphoenolpyruvate + H2O. Its pathway is carbohydrate degradation; glycolysis; pyruvate from D-glyceraldehyde 3-phosphate: step 4/5. Its function is as follows. Catalyzes the reversible conversion of 2-phosphoglycerate (2-PG) into phosphoenolpyruvate (PEP). It is essential for the degradation of carbohydrates via glycolysis. This is Enolase from Christiangramia forsetii (strain DSM 17595 / CGMCC 1.15422 / KT0803) (Gramella forsetii).